Consider the following 638-residue polypeptide: NBPF family member NBPF4 (638 aa).

Coiled coils occupy residues 10–43 and 69–115; these read SERAEMNILEINQELRSQLAESNQQFRDLKEKFL and DSVL…KLRE. Residues 157–285 form a disordered region; the sequence is HLVHKLSPEN…VPPRHHDKSN (129 aa). A compositionally biased stretch (acidic residues) spans 165–179; it reads ENDEDEDEDEDDKDE. One can recognise an Olduvai 1 domain in the interval 174-261; it reads EDDKDEEVEK…EEEEALNIPP (88 aa). Over residues 192-202 the composition is skewed to basic and acidic residues; that stretch reads EVQKTEEKEVP. The span at 214–226 shows a compositional bias: low complexity; sequence SNSHNPSNSNQPH. 2 stretches are compositionally biased toward basic and acidic residues: residues 232-251 and 264-273; these read TFKEHEVDSALVVESEHPHD and QNDHEEEEGK. Olduvai domains follow at residues 326–399 and 400–503; these read EKQS…ALVD and KIKK…SQAQ. Positions 562-584 are disordered; that stretch reads GMKNPPQLEDDALEGSASNTQGR.

Belongs to the NBPF family. Expressed in testis.

Its subcellular location is the cytoplasm. This Homo sapiens (Human) protein is NBPF family member NBPF4.